A 108-amino-acid polypeptide reads, in one-letter code: MKYIIFLFRAIWLALSLLILFFSMHRLSLLDSTRDVSELISLMSYGMMVICFPTGIVFFIALIFIGTVSDIIGVRIDSKYIMAIIIWLYFLSGGYIQWFVLSKRIINK.

3 helical membrane passes run 4 to 24 (IIFL…FFSM), 46 to 66 (GMMV…IFIG), and 81 to 101 (IMAI…WFVL).

The protein resides in the cell membrane. This is an uncharacterized protein from Escherichia coli O157:H7.